A 722-amino-acid chain; its full sequence is Glycine--tRNA ligase beta subunit (722 aa).

Belongs to the class-II aminoacyl-tRNA synthetase family. As to quaternary structure, tetramer of two alpha and two beta subunits.

The protein localises to the cytoplasm. It catalyses the reaction tRNA(Gly) + glycine + ATP = glycyl-tRNA(Gly) + AMP + diphosphate. The chain is Glycine--tRNA ligase beta subunit (glyS) from Xylella fastidiosa (strain 9a5c).